Consider the following 31-residue polypeptide: Cytochrome b6-f complex subunit 6 (31 aa).

The chain crosses the membrane as a helical span at residues 4-24; it reads ITSYFGFLLAALTLTLALFIG.

It belongs to the PetL family. The 4 large subunits of the cytochrome b6-f complex are cytochrome b6, subunit IV (17 kDa polypeptide, PetD), cytochrome f and the Rieske protein, while the 4 small subunits are PetG, PetL, PetM and PetN. The complex functions as a dimer.

Its subcellular location is the plastid. The protein localises to the chloroplast thylakoid membrane. Its function is as follows. Component of the cytochrome b6-f complex, which mediates electron transfer between photosystem II (PSII) and photosystem I (PSI), cyclic electron flow around PSI, and state transitions. PetL is important for photoautotrophic growth as well as for electron transfer efficiency and stability of the cytochrome b6-f complex. The chain is Cytochrome b6-f complex subunit 6 from Oryza sativa subsp. japonica (Rice).